Here is a 246-residue protein sequence, read N- to C-terminus: UDP-N-acetyl-D-mannosaminuronic acid transferase (246 aa).

The protein belongs to the glycosyltransferase 26 family.

The catalysed reaction is UDP-N-acetyl-alpha-D-mannosaminouronate + N-acetyl-alpha-D-glucosaminyl-di-trans,octa-cis-undecaprenyl diphosphate = beta-D-ManNAcA-(1-&gt;4)-alpha-D-GlcNAc-di-trans,octa-cis-undecaprenyl diphosphate + UDP + H(+). Its pathway is bacterial outer membrane biogenesis; enterobacterial common antigen biosynthesis. In terms of biological role, catalyzes the synthesis of Und-PP-GlcNAc-ManNAcA (Lipid II), the second lipid-linked intermediate involved in enterobacterial common antigen (ECA) synthesis. The chain is UDP-N-acetyl-D-mannosaminuronic acid transferase from Escherichia coli (strain K12).